The primary structure comprises 510 residues: Probable cytochrome P450 4d20 (510 aa).

Cys-455 contributes to the heme binding site.

Belongs to the cytochrome P450 family. The cofactor is heme.

The protein resides in the endoplasmic reticulum membrane. The protein localises to the microsome membrane. Its function is as follows. May be involved in the metabolism of insect hormones and in the breakdown of synthetic insecticides. In Drosophila melanogaster (Fruit fly), this protein is Probable cytochrome P450 4d20 (Cyp4d20).